A 124-amino-acid chain; its full sequence is Small ribosomal subunit protein uS12 (124 aa).

Asp-89 is modified (3-methylthioaspartic acid).

This sequence belongs to the universal ribosomal protein uS12 family. In terms of assembly, part of the 30S ribosomal subunit. Contacts proteins S8 and S17. May interact with IF1 in the 30S initiation complex.

Functionally, with S4 and S5 plays an important role in translational accuracy. Its function is as follows. Interacts with and stabilizes bases of the 16S rRNA that are involved in tRNA selection in the A site and with the mRNA backbone. Located at the interface of the 30S and 50S subunits, it traverses the body of the 30S subunit contacting proteins on the other side and probably holding the rRNA structure together. The combined cluster of proteins S8, S12 and S17 appears to hold together the shoulder and platform of the 30S subunit. In Treponema pallidum subsp. pallidum (strain SS14), this protein is Small ribosomal subunit protein uS12.